A 141-amino-acid chain; its full sequence is Large ribosomal subunit protein bL17 (141 aa).

The protein belongs to the bacterial ribosomal protein bL17 family. As to quaternary structure, part of the 50S ribosomal subunit. Contacts protein L32.

In Agrobacterium fabrum (strain C58 / ATCC 33970) (Agrobacterium tumefaciens (strain C58)), this protein is Large ribosomal subunit protein bL17.